Reading from the N-terminus, the 238-residue chain is MGRSFEVRKASMAKTAGAKIKVYSKYGKEIYMCAKNGGGDPDMNLSLKHLIAKAKKDQVPAHVIDKAIDKANGGGGEDYTPARYEGFGPGGTSVIVDCLTDNGNRTFQDVRQCFVKVGAKIGVEGSVSHMFDHQAVFQFKGEDDEIILETLMMEDVDVTDVELEDGVITVFAPHTEFFKTKTALNGAFPDLTIDVEEITFVPQTHTPVAGEDAEKFQKFLDLLDDCDDVQQVYHNGEL.

This sequence belongs to the TACO1 family.

It is found in the cytoplasm. In Vibrio campbellii (strain ATCC BAA-1116), this protein is Probable transcriptional regulatory protein VIBHAR_07036.